The chain runs to 130 residues: Histone H2A type 1 (130 aa).

The segment at 1–22 (MSGRGKQGGKARAKAKTRSSRA) is disordered. N-acetylserine is present on Ser-2. Ser-2 carries the phosphoserine; by RPS6KA5 modification. Arg-4 carries the post-translational modification Citrulline; alternate. Position 4 is a symmetric dimethylarginine; by PRMT5; alternate (Arg-4). N6-(2-hydroxyisobutyryl)lysine is present on Lys-6. Residues 7–19 (QGGKARAKAKTRS) are compositionally biased toward basic residues. The residue at position 10 (Lys-10) is an N6-(2-hydroxyisobutyryl)lysine; alternate. An N6-lactoyllysine; alternate modification is found at Lys-10. Position 10 is an N6-succinyllysine; alternate (Lys-10). Residues Lys-14 and Lys-16 each participate in a glycyl lysine isopeptide (Lys-Gly) (interchain with G-Cter in ubiquitin) cross-link. Position 37 is an N6-(2-hydroxyisobutyryl)lysine; alternate (Lys-37). An N6-(beta-hydroxybutyryl)lysine; alternate modification is found at Lys-37. Lys-37 is subject to N6-crotonyllysine; alternate. 2 positions are modified to N6-(2-hydroxyisobutyryl)lysine: Lys-75 and Lys-76. The residue at position 96 (Lys-96) is an N6-(2-hydroxyisobutyryl)lysine; alternate. Lys-96 carries the post-translational modification N6-succinyllysine; alternate. Lys-96 carries the post-translational modification N6-glutaryllysine; alternate. At Lys-100 the chain carries N6-glutaryllysine. Gln-105 carries the post-translational modification N5-methylglutamine. Lys-119 is modified (N6-(2-hydroxyisobutyryl)lysine; alternate). Lys-119 and Lys-120 each carry N6-crotonyllysine; alternate. Residues Lys-119 and Lys-120 each carry the N6-glutaryllysine; alternate modification. Residue Lys-120 forms a Glycyl lysine isopeptide (Lys-Gly) (interchain with G-Cter in ubiquitin); alternate linkage. Position 121 is a phosphothreonine; by DCAF1 (Thr-121). Residue Lys-126 is modified to N6-crotonyllysine; alternate. Lys-126 carries the N6-glutaryllysine; alternate modification.

Belongs to the histone H2A family. The nucleosome is a histone octamer containing two molecules each of H2A, H2B, H3 and H4 assembled in one H3-H4 heterotetramer and two H2A-H2B heterodimers. The octamer wraps approximately 147 bp of DNA. Interacts with VRK1; the interaction is mediated by the nucleosome acidic patch, a cluster of negatively charged residues of H2A and H2B forming a cleft within the nucleosome core. Deiminated on Arg-4 in granulocytes upon calcium entry. In terms of processing, monoubiquitination of Lys-120 (H2AK119Ub) by RING1, TRIM37 and RNF2/RING2 complex gives a specific tag for epigenetic transcriptional repression and participates in X chromosome inactivation of female mammals. It is involved in the initiation of both imprinted and random X inactivation. Ubiquitinated H2A is enriched in inactive X chromosome chromatin. Ubiquitination of H2A functions downstream of methylation of 'Lys-27' of histone H3 (H3K27me). H2AK119Ub by RNF2/RING2 can also be induced by ultraviolet and may be involved in DNA repair. Following DNA double-strand breaks (DSBs), it is ubiquitinated through 'Lys-63' linkage of ubiquitin moieties by the E2 ligase UBE2N and the E3 ligases RNF8 and RNF168, leading to the recruitment of repair proteins to sites of DNA damage. Ubiquitination at Lys-14 and Lys-16 (H2AK13Ub and H2AK15Ub, respectively) in response to DNA damage is initiated by RNF168 that mediates monoubiquitination at these 2 sites, and 'Lys-63'-linked ubiquitin are then conjugated to monoubiquitin; RNF8 is able to extend 'Lys-63'-linked ubiquitin chains in vitro. H2AK119Ub and ionizing radiation-induced 'Lys-63'-linked ubiquitination (H2AK13Ub and H2AK15Ub) are distinct events. Post-translationally, phosphorylation on Ser-2 (H2AS1ph) is enhanced during mitosis. Phosphorylation on Ser-2 by RPS6KA5/MSK1 directly represses transcription. Acetylation of H3 inhibits Ser-2 phosphorylation by RPS6KA5/MSK1. Phosphorylation at Thr-121 (H2AT120ph) by DCAF1 is present in the regulatory region of many tumor suppresor genes and down-regulates their transcription. Symmetric dimethylation on Arg-4 by the PRDM1/PRMT5 complex may play a crucial role in the germ-cell lineage. In terms of processing, glutamine methylation at Gln-105 (H2AQ104me) by FBL is specifically dedicated to polymerase I. It is present at 35S ribosomal DNA locus and impairs binding of the FACT complex. Post-translationally, crotonylation (Kcr) is specifically present in male germ cells and marks testis-specific genes in post-meiotic cells, including X-linked genes that escape sex chromosome inactivation in haploid cells. Crotonylation marks active promoters and enhancers and confers resistance to transcriptional repressors. It is also associated with post-meiotically activated genes on autosomes. Lactylated in macrophages by EP300/P300 by using lactoyl-CoA directly derived from endogenous or exogenous lactate, leading to stimulates gene transcription.

The protein localises to the nucleus. The protein resides in the chromosome. Its function is as follows. Core component of nucleosome. Nucleosomes wrap and compact DNA into chromatin, limiting DNA accessibility to the cellular machineries which require DNA as a template. Histones thereby play a central role in transcription regulation, DNA repair, DNA replication and chromosomal stability. DNA accessibility is regulated via a complex set of post-translational modifications of histones, also called histone code, and nucleosome remodeling. This is Histone H2A type 1 from Bos taurus (Bovine).